Here is a 361-residue protein sequence, read N- to C-terminus: D-alanine--D-alanine ligase (361 aa).

In terms of domain architecture, ATP-grasp spans 144–350 (KLCVSEAGIA…FPELCDRLLQ (207 aa)). An ATP-binding site is contributed by 177–232 (PETLIYPVFVKPAHLGSSVGISKVSVQGELPEALAHACNLDTKVLIEQAMHGKEIE). Residues D303, E317, and N319 each contribute to the Mg(2+) site.

This sequence belongs to the D-alanine--D-alanine ligase family. Mg(2+) is required as a cofactor. Mn(2+) serves as cofactor.

The protein resides in the cytoplasm. It catalyses the reaction 2 D-alanine + ATP = D-alanyl-D-alanine + ADP + phosphate + H(+). It functions in the pathway cell wall biogenesis; peptidoglycan biosynthesis. Cell wall formation. The sequence is that of D-alanine--D-alanine ligase from Chlorobium phaeovibrioides (strain DSM 265 / 1930) (Prosthecochloris vibrioformis (strain DSM 265)).